A 240-amino-acid chain; its full sequence is MELSPNLKSNLNSEMNDLVQQAEEWAQSQHRSASPGALKDPKLCAIYKMILQNSALLLIEKSGVKTVEEFQKVFGPIIEEQKNKEDEIIEFEEFEEIEKARAELASPTSFTKYSMMLDEPLSASPFNRRRTSLFSDLHVLSPIASASSESFEKPKRFASSTQHAKKSFVTVESTRTPWRRSNSMYLEDVLNRTINTPLKSHSASRLNHLTPSPRPGETPLENRASRLRRMKIEEKMNENF.

The segment covering 197–210 (PLKSHSASRLNHLT) has biased composition (polar residues). The interval 197–222 (PLKSHSASRLNHLTPSPRPGETPLEN) is disordered.

This is an uncharacterized protein from Caenorhabditis elegans.